Reading from the N-terminus, the 392-residue chain is Imidazolonepropionase (392 aa).

The Fe(3+) site is built by His-70 and His-72. Zn(2+) contacts are provided by His-70 and His-72. Residues Arg-79, Tyr-137, and His-164 each contribute to the 4-imidazolone-5-propanoate site. Residue Tyr-137 participates in N-formimidoyl-L-glutamate binding. His-227 provides a ligand contact to Fe(3+). His-227 contacts Zn(2+). Gln-230 contacts 4-imidazolone-5-propanoate. Residue Asp-301 coordinates Fe(3+). A Zn(2+)-binding site is contributed by Asp-301. The N-formimidoyl-L-glutamate site is built by Asn-303 and Gly-305. Thr-306 contacts 4-imidazolone-5-propanoate.

It belongs to the metallo-dependent hydrolases superfamily. HutI family. Zn(2+) serves as cofactor. The cofactor is Fe(3+).

It localises to the cytoplasm. The enzyme catalyses 4-imidazolone-5-propanoate + H2O = N-formimidoyl-L-glutamate. It functions in the pathway amino-acid degradation; L-histidine degradation into L-glutamate; N-formimidoyl-L-glutamate from L-histidine: step 3/3. Catalyzes the hydrolytic cleavage of the carbon-nitrogen bond in imidazolone-5-propanoate to yield N-formimidoyl-L-glutamate. It is the third step in the universal histidine degradation pathway. The protein is Imidazolonepropionase of Nocardia farcinica (strain IFM 10152).